The sequence spans 354 residues: 3-isopropylmalate dehydrogenase (354 aa).

Position 76–87 (76–87) interacts with NAD(+); that stretch reads GPRWDSAKERPE. The substrate site is built by Arg-94, Arg-104, Arg-130, and Asp-215. Asp-215, Asp-239, and Asp-243 together coordinate Mg(2+). 273–285 contacts NAD(+); it reads GSAPDIAGKNKAN.

It belongs to the isocitrate and isopropylmalate dehydrogenases family. LeuB type 1 subfamily. In terms of assembly, homodimer. It depends on Mg(2+) as a cofactor. Mn(2+) is required as a cofactor.

The protein localises to the cytoplasm. The catalysed reaction is (2R,3S)-3-isopropylmalate + NAD(+) = 4-methyl-2-oxopentanoate + CO2 + NADH. The protein operates within amino-acid biosynthesis; L-leucine biosynthesis; L-leucine from 3-methyl-2-oxobutanoate: step 3/4. Its function is as follows. Catalyzes the oxidation of 3-carboxy-2-hydroxy-4-methylpentanoate (3-isopropylmalate) to 3-carboxy-4-methyl-2-oxopentanoate. The product decarboxylates to 4-methyl-2 oxopentanoate. This Bacillus cereus (strain ATCC 14579 / DSM 31 / CCUG 7414 / JCM 2152 / NBRC 15305 / NCIMB 9373 / NCTC 2599 / NRRL B-3711) protein is 3-isopropylmalate dehydrogenase.